Consider the following 330-residue polypeptide: Ornithine carbamoyltransferase (330 aa).

Residues 57–60 (STRT), Gln-84, Arg-108, and 135–138 (HPTQ) contribute to the carbamoyl phosphate site. L-ornithine contacts are provided by residues Asn-168, Asp-232, and 236–237 (SM). Carbamoyl phosphate is bound by residues 273-274 (CL) and Arg-318.

It belongs to the aspartate/ornithine carbamoyltransferase superfamily. OTCase family.

It localises to the cytoplasm. The catalysed reaction is carbamoyl phosphate + L-ornithine = L-citrulline + phosphate + H(+). Its pathway is amino-acid biosynthesis; L-arginine biosynthesis; L-arginine from L-ornithine and carbamoyl phosphate: step 1/3. In terms of biological role, reversibly catalyzes the transfer of the carbamoyl group from carbamoyl phosphate (CP) to the N(epsilon) atom of ornithine (ORN) to produce L-citrulline. This is Ornithine carbamoyltransferase from Alkaliphilus metalliredigens (strain QYMF).